The sequence spans 429 residues: Enolase (429 aa).

Glutamine 168 is a (2R)-2-phosphoglycerate binding site. The active-site Proton donor is glutamate 210. Mg(2+)-binding residues include aspartate 247, glutamate 288, and aspartate 315. The (2R)-2-phosphoglycerate site is built by lysine 340, arginine 369, serine 370, and lysine 391. Lysine 340 functions as the Proton acceptor in the catalytic mechanism.

This sequence belongs to the enolase family. Mg(2+) is required as a cofactor.

It localises to the cytoplasm. The protein resides in the secreted. Its subcellular location is the cell surface. It catalyses the reaction (2R)-2-phosphoglycerate = phosphoenolpyruvate + H2O. The protein operates within carbohydrate degradation; glycolysis; pyruvate from D-glyceraldehyde 3-phosphate: step 4/5. In terms of biological role, catalyzes the reversible conversion of 2-phosphoglycerate (2-PG) into phosphoenolpyruvate (PEP). It is essential for the degradation of carbohydrates via glycolysis. This is Enolase from Nostoc sp. (strain PCC 7120 / SAG 25.82 / UTEX 2576).